The sequence spans 550 residues: Arginine--tRNA ligase (550 aa).

The short motif at 130–140 (ANPTGPIHIGG) is the 'HIGH' region element.

The protein belongs to the class-I aminoacyl-tRNA synthetase family. In terms of assembly, monomer.

The protein resides in the cytoplasm. It catalyses the reaction tRNA(Arg) + L-arginine + ATP = L-arginyl-tRNA(Arg) + AMP + diphosphate. The polypeptide is Arginine--tRNA ligase (Mycobacterium ulcerans (strain Agy99)).